A 326-amino-acid chain; its full sequence is N-acetyl-gamma-glutamyl-phosphate reductase (326 aa).

The active site involves Cys-155.

It belongs to the NAGSA dehydrogenase family. Type 1 subfamily.

It localises to the cytoplasm. The enzyme catalyses N-acetyl-L-glutamate 5-semialdehyde + phosphate + NADP(+) = N-acetyl-L-glutamyl 5-phosphate + NADPH + H(+). Its pathway is amino-acid biosynthesis; L-arginine biosynthesis; N(2)-acetyl-L-ornithine from L-glutamate: step 3/4. Its function is as follows. Catalyzes the NADPH-dependent reduction of N-acetyl-5-glutamyl phosphate to yield N-acetyl-L-glutamate 5-semialdehyde. This is N-acetyl-gamma-glutamyl-phosphate reductase from Shewanella baltica (strain OS185).